Consider the following 506-residue polypeptide: MLGFLSRLGLWASGLILILGFLKLLRLLLRRQRLARAMDSFPGPPTHWLFGHALEIQKTGSLDKVVTWTQQFPYAHPLWVGQFIGFLNIYEPDYAKAVYSRGDPKAPDVYDFFLQWIGKGLLVLDGPKWFQHRKLLTPGFHYDVLKPYVAIFADSTRIMLEKWEKKACEGKSFDIFSDVGHMALDTLMKCTFGKGDSGLNHRDSSYYVAVSELTLLMQQRIDSFQYHNDFIYWLTPHGRRFLRACRAAHDHTDRVIRQRKAALQDEKEREKIQNRRHLDFLDILLDVRGESGVQLSDTDLRAEVDTFMFEGHDTTTSGISWFLYCMALYPEHQQRCREEVREILGDQDSFQWEDLAKMTYLTMCMKECFRLYPPVPQVYRQLSKPVSFVDGRSLPAGSLISLHIYALHRNSDVWPDPEVFDPLRFSPENSSGRHPYAFIPFSAGPRNCIGQQFAMNEMKVVTALCLLRFEFSVDPLRLPIKLPQLVLRSKNGIHLYLKPLGPKAEK.

Heme is bound at residue glutamate 310. Residue serine 431 is modified to Phosphoserine. Residue cysteine 448 participates in heme binding.

The protein belongs to the cytochrome P450 family. Heme is required as a cofactor.

It is found in the endoplasmic reticulum membrane. It localises to the microsome membrane. It carries out the reaction an organic molecule + reduced [NADPH--hemoprotein reductase] + O2 = an alcohol + oxidized [NADPH--hemoprotein reductase] + H2O + H(+). Functionally, cytochromes P450 are a group of heme-thiolate monooxygenases. In liver microsomes, this enzyme is involved in an NADPH-dependent electron transport pathway. It oxidizes a variety of structurally unrelated compounds, including steroids, fatty acids, and xenobiotics. This is Cytochrome P450 4B1 (CYP4B1) from Oryctolagus cuniculus (Rabbit).